The chain runs to 592 residues: Aspartate--tRNA ligase (592 aa).

An L-aspartate-binding site is contributed by glutamate 171. An aspartate region spans residues 195–198 (QLFK). Arginine 217 is a binding site for L-aspartate. ATP-binding positions include 217–219 (RDE) and glutamine 226. Histidine 448 provides a ligand contact to L-aspartate. Residue glutamate 482 participates in ATP binding. Arginine 489 serves as a coordination point for L-aspartate. 534–537 (GLDR) contacts ATP.

It belongs to the class-II aminoacyl-tRNA synthetase family. Type 1 subfamily. As to quaternary structure, homodimer.

Its subcellular location is the cytoplasm. It carries out the reaction tRNA(Asp) + L-aspartate + ATP = L-aspartyl-tRNA(Asp) + AMP + diphosphate. Catalyzes the attachment of L-aspartate to tRNA(Asp) in a two-step reaction: L-aspartate is first activated by ATP to form Asp-AMP and then transferred to the acceptor end of tRNA(Asp). The sequence is that of Aspartate--tRNA ligase from Pseudoalteromonas translucida (strain TAC 125).